Reading from the N-terminus, the 3004-residue chain is Guanylate cyclase beta (3004 aa).

Residues 1–66 lie on the Cytoplasmic side of the membrane; that stretch reads MKETDKIKSE…FSLYNFIRRL (66 aa). A helical membrane pass occupies residues 67–87; it reads ISLDAVIVYTLFMTVYIFSEI. The Extracellular segment spans residues 88 to 94; the sequence is SQGITKK. Residues 95-115 form a helical membrane-spanning segment; that stretch reads YLFVDTAISLFLNIGILVVIE. The Cytoplasmic portion of the chain corresponds to 116–300; the sequence is SLFELKLLKD…TFCIKMNNVV (185 aa). The helical transmembrane segment at 301–321 threads the bilayer; the sequence is YYLIFMYILFVLLSIIIKAIF. The Extracellular segment spans residues 322–334; the sequence is YRKGKLLENSNDT. Asparagine 332 carries an N-linked (GlcNAc...) asparagine glycan. The chain crosses the membrane as a helical span at residues 335–355; sequence FFTVLEDFIGLYILVLPVMLY. At 356-991 the chain is on the cytoplasmic side; sequence SEKSLIYIIQ…GRLNRFSLCR (636 aa). A helical transmembrane segment spans residues 992 to 1012; the sequence is AFLWIIYLKVMIGSFYFFHNF. The Extracellular portion of the chain corresponds to 1013-1022; that stretch reads DNFFSGSSIS. The helical transmembrane segment at 1023 to 1043 threads the bilayer; the sequence is SILYSQTAFAIFHYSLIVAFA. Over 1044–1072 the chain is Cytoplasmic; the sequence is SYEIDIPYKFIRNFPYIYQLARRKYFLNN. Residues 1073–1093 form a helical membrane-spanning segment; it reads TIIFLNIVESIFSSFISYYIL. At 1094 to 1105 the chain is on the extracellular side; the sequence is RGNLFNLITHRK. A helical transmembrane segment spans residues 1106 to 1126; that stretch reads FTFHIFVLNFFLISEKILLFS. Residues 1127–1130 lie on the Cytoplasmic side of the membrane; it reads KTWH. The helical transmembrane segment at 1131–1151 threads the bilayer; the sequence is IFFFIMTIIIVSILFIYINIY. The Extracellular segment spans residues 1152-1171; it reads TLVDCLITGKCEFSLFDPED. The chain crosses the membrane as a helical span at residues 1172–1192; it reads SYFWISLLPILYINFIIDKFM. Topologically, residues 1193 to 1297 are cytoplasmic; sequence KFVKNKIYPD…YEKRNKLKLR (105 aa). The chain crosses the membrane as a helical span at residues 1298–1318; sequence IIILLLFIIFLITFTIQIIIS. Over 1319–1327 the chain is Extracellular; sequence KFIEKKLHS. A helical membrane pass occupies residues 1328 to 1348; sequence LSYLTVIYYIVAVLYLIKILI. At 1349–1353 the chain is on the cytoplasmic side; sequence RNKTN. Residues 1354-1374 traverse the membrane as a helical segment; it reads YTYFYIIGKLLLVIGYLLEIS. The Extracellular portion of the chain corresponds to 1375 to 1394; the sequence is ENSVNNIINMLVTYSFTVCY. The helical transmembrane segment at 1395 to 1415 threads the bilayer; the sequence is IFFISFKILEGLVMCIIILSI. Residues 1416–1457 lie on the Cytoplasmic side of the membrane; it reads AIWVYYHKNNNLNAMCTDFCDNPYTSLDNLEYINISCICKQQ. A helical transmembrane segment spans residues 1458-1478; that stretch reads IFTFLICTLSFTLICLFMKYY. The Extracellular segment spans residues 1479–1500; the sequence is EIYYLKKKFLTRYKQKVNLGKQ. A helical membrane pass occupies residues 1501–1521; that stretch reads IEILHTMLPSFLVEYLLVSDP. Residues 1522-2563 lie on the Cytoplasmic side of the membrane; sequence KADGIMVGKN…EIINIDLTKK (1042 aa). The Guanylate cyclase 1 domain occupies 1541–1696; sequence SVIFCDIDDF…DTVNTASRMK (156 aa). Positions 2463–2476 are enriched in polar residues; that stretch reads TMSNSKSGQTNITT. Residues 2463–2491 form a disordered region; that stretch reads TMSNSKSGQTNITTDNKKSQIKKNGDVNK. Basic and acidic residues predominate over residues 2477–2488; that stretch reads DNKKSQIKKNGD. A helical membrane pass occupies residues 2564 to 2584; sequence LIIIFVISELILSLCNVIELS. Over 2585–2594 the chain is Extracellular; it reads YYENKETPND. A helical membrane pass occupies residues 2595–2615; sequence FIVIIWLIRSIYLFTITFIWL. The Cytoplasmic segment spans residues 2616 to 2634; the sequence is LLKTKLKEYKDNSSKMMWT. A helical membrane pass occupies residues 2635–2655; that stretch reads TFILNIFLSSWGIIMIDLACI. Residues 2656–2667 are Extracellular-facing; it reads HYSNLVGNSRER. A helical transmembrane segment spans residues 2668–2688; it reads SIFFMKDATELIISMQLIFVK. At 2689 to 2695 the chain is on the cytoplasmic side; the sequence is NMLFKHK. A helical transmembrane segment spans residues 2696–2716; sequence FFFFVFFFVFLMYSFFKLFVI. The Extracellular segment spans residues 2717-2722; the sequence is HVCELR. Residues 2723 to 2743 form a helical membrane-spanning segment; sequence ICCSILLILSINILYFWYSEY. At 2744–3004 the chain is on the cytoplasmic side; the sequence is LDRTQYIIKR…KLREQNKVKG (261 aa). The Guanylate cyclase 2 domain maps to 2793-2927; sequence AFLFADIVGF…LDVLIANHIE (135 aa). The Mg(2+) site is built by aspartate 2798, isoleucine 2799, and aspartate 2842.

The protein in the N-terminal section; belongs to the cation transport ATPase (P-type) (TC 3.A.3) family. Type IV subfamily. In the C-terminal section; belongs to the adenylyl cyclase class-4/guanylyl cyclase family. The cofactor is Mg(2+). Mn(2+) is required as a cofactor.

Its subcellular location is the membrane. The catalysed reaction is GTP = 3',5'-cyclic GMP + diphosphate. In terms of biological role, catalyzes the synthesis of the second messenger cGMP from GTP. Probably by regulating cGMP production, required for ookinete gliding motility, which is necessary for the ookinete to traverse the midgut epithelium of the mosquito. This is Guanylate cyclase beta from Plasmodium berghei (strain Anka).